Consider the following 120-residue polypeptide: MADSALELDDFLSRFQLLRPQPHAPPLNQRQAAVLVPIVRRPQPGLLLTQRSPLMRKHAGQVAFPGGAVDNSDATLIAAALREAQEEVAIPPESVEVIGVLPPVDSVTGFQVTPVVGIIP.

The region spanning 29–120 (QRQAAVLVPI…QVTPVVGIIP (92 aa)) is the Nudix hydrolase domain. Positions 67-89 (GAVDNSDATLIAAALREAQEEVA) match the Nudix box motif. 2 residues coordinate Mg(2+): glutamate 83 and glutamate 87.

The protein belongs to the Nudix hydrolase family. PCD1 subfamily. The cofactor is Mn(2+). It depends on Mg(2+) as a cofactor.

Its function is as follows. Probably mediates the hydrolysis of some nucleoside diphosphate derivatives. This is an uncharacterized protein from Klebsiella aerogenes (Enterobacter aerogenes).